Consider the following 357-residue polypeptide: Aminotransferase TOXF (357 aa).

Residue arginine 87 participates in pyridoxal 5'-phosphate binding. At lysine 188 the chain carries N6-(pyridoxal phosphate)lysine. Glutamate 227 contacts pyridoxal 5'-phosphate.

This sequence belongs to the class-IV pyridoxal-phosphate-dependent aminotransferase family. Requires pyridoxal 5'-phosphate as cofactor.

It functions in the pathway mycotoxin biosynthesis; HC-toxin biosynthesis. In terms of biological role, aminotransferase, part of the diffuse TOX2 gene cluster that mediates the biosynthesis of the HC-toxin, cyclic tetrapeptide of structure cyclo(D-Pro-L-Ala-D-Ala-L-Aeo), where Aeo stands for 2-amino-9,10-epoxi-8-oxodecanoic acid. HC-toxin is a determinant of specificity and virulence in the interaction between the producing fungus and its host, maize. TOXF contributes to the synthesis of 2-amino-9,10-epoxi-8-oxodecanoic acid, an essential precursor for the production of the major forms of HC-toxin by the non-ribosomal peptide synthetase HTS1. The sequence is that of Aminotransferase TOXF (TOXF) from Cochliobolus carbonum (Maize leaf spot fungus).